The primary structure comprises 229 residues: uncharacterized protein (229 aa).

An HTH cro/C1-type domain is found at 24–78 (LRKWRSIFNASQSDLARKLGISPSVISDYESGRRKPGTAFLKKFVCALIELDGER). A DNA-binding region (H-T-H motif) is located at residues 35–54 (QSDLARKLGISPSVISDYES).

This is an uncharacterized protein from Archaeoglobus fulgidus (strain ATCC 49558 / DSM 4304 / JCM 9628 / NBRC 100126 / VC-16).